Consider the following 266-residue polypeptide: Glucosamine-6-phosphate deaminase (266 aa).

Aspartate 72 (proton acceptor; for enolization step) is an active-site residue. Aspartate 141 functions as the For ring-opening step in the catalytic mechanism. The active-site Proton acceptor; for ring-opening step is histidine 143. Catalysis depends on glutamate 148, which acts as the For ring-opening step.

It belongs to the glucosamine/galactosamine-6-phosphate isomerase family. NagB subfamily. As to quaternary structure, homohexamer.

It catalyses the reaction alpha-D-glucosamine 6-phosphate + H2O = beta-D-fructose 6-phosphate + NH4(+). The protein operates within amino-sugar metabolism; N-acetylneuraminate degradation; D-fructose 6-phosphate from N-acetylneuraminate: step 5/5. With respect to regulation, allosterically activated by N-acetylglucosamine 6-phosphate (GlcNAc6P). Functionally, catalyzes the reversible isomerization-deamination of glucosamine 6-phosphate (GlcN6P) to form fructose 6-phosphate (Fru6P) and ammonium ion. The polypeptide is Glucosamine-6-phosphate deaminase (Erwinia tasmaniensis (strain DSM 17950 / CFBP 7177 / CIP 109463 / NCPPB 4357 / Et1/99)).